We begin with the raw amino-acid sequence, 62 residues long: Large ribosomal subunit protein bL32 (62 aa).

It belongs to the bacterial ribosomal protein bL32 family.

In Treponema pallidum (strain Nichols), this protein is Large ribosomal subunit protein bL32 (rpmF).